A 66-amino-acid chain; its full sequence is Large ribosomal subunit protein uL29 (66 aa).

This sequence belongs to the universal ribosomal protein uL29 family.

In Rhizobium etli (strain CIAT 652), this protein is Large ribosomal subunit protein uL29.